We begin with the raw amino-acid sequence, 197 residues long: Proteasome subunit beta 1 (197 aa).

Positions 1–6 (MNRKTG) are cleaved as a propeptide — removed in mature form; by autocatalysis. The Nucleophile role is filled by T7.

Belongs to the peptidase T1B family. In terms of assembly, the 20S proteasome core is composed of 14 alpha and 14 beta subunits that assemble into four stacked heptameric rings, resulting in a barrel-shaped structure. The two inner rings, each composed of seven catalytic beta subunits, are sandwiched by two outer rings, each composed of seven alpha subunits. The catalytic chamber with the active sites is on the inside of the barrel. Has a gated structure, the ends of the cylinder being occluded by the N-termini of the alpha-subunits. Is capped at one or both ends by the proteasome regulatory ATPase, PAN.

Its subcellular location is the cytoplasm. It catalyses the reaction Cleavage of peptide bonds with very broad specificity.. The formation of the proteasomal ATPase PAN-20S proteasome complex, via the docking of the C-termini of PAN into the intersubunit pockets in the alpha-rings, triggers opening of the gate for substrate entry. Interconversion between the open-gate and close-gate conformations leads to a dynamic regulation of the 20S proteasome proteolysis activity. Functionally, component of the proteasome core, a large protease complex with broad specificity involved in protein degradation. The sequence is that of Proteasome subunit beta 1 from Pyrococcus abyssi (strain GE5 / Orsay).